Consider the following 157-residue polypeptide: 2-C-methyl-D-erythritol 2,4-cyclodiphosphate synthase (157 aa).

Residues D8 and H10 each contribute to the a divalent metal cation site. Residues 8–10 (DVH) and 34–35 (HS) contribute to the 4-CDP-2-C-methyl-D-erythritol 2-phosphate site. H42 provides a ligand contact to a divalent metal cation. Residues 56–58 (DLG), 61–65 (FPDTD), 132–135 (TTTE), F139, and R142 each bind 4-CDP-2-C-methyl-D-erythritol 2-phosphate.

It belongs to the IspF family. In terms of assembly, homotrimer. Requires a divalent metal cation as cofactor.

The catalysed reaction is 4-CDP-2-C-methyl-D-erythritol 2-phosphate = 2-C-methyl-D-erythritol 2,4-cyclic diphosphate + CMP. It functions in the pathway isoprenoid biosynthesis; isopentenyl diphosphate biosynthesis via DXP pathway; isopentenyl diphosphate from 1-deoxy-D-xylulose 5-phosphate: step 4/6. In terms of biological role, involved in the biosynthesis of isopentenyl diphosphate (IPP) and dimethylallyl diphosphate (DMAPP), two major building blocks of isoprenoid compounds. Catalyzes the conversion of 4-diphosphocytidyl-2-C-methyl-D-erythritol 2-phosphate (CDP-ME2P) to 2-C-methyl-D-erythritol 2,4-cyclodiphosphate (ME-CPP) with a corresponding release of cytidine 5-monophosphate (CMP). This chain is 2-C-methyl-D-erythritol 2,4-cyclodiphosphate synthase, found in Salinibacter ruber (strain DSM 13855 / M31).